The sequence spans 58 residues: uncharacterized protein (58 aa).

This is an uncharacterized protein from Methanocaldococcus jannaschii (strain ATCC 43067 / DSM 2661 / JAL-1 / JCM 10045 / NBRC 100440) (Methanococcus jannaschii).